The primary structure comprises 109 residues: MVRSDIIRGHLDSIILRLILEKDRYGYEISQEISNRTNNSFQIKEATLYAVFQRLEKKEVIEAYYGDVSDGGKRKYYRITSLGKAYLSELVKEWAEVKEIIDLFMEGLE.

This is an uncharacterized protein from Lysinibacillus sphaericus (Bacillus sphaericus).